The sequence spans 343 residues: Fructose-1,6-bisphosphatase class 1 (343 aa).

Positions 90, 109, 111, and 112 each coordinate Mg(2+). Substrate is bound by residues 112-115 and Asn199; that span reads DGSS. Position 271 (Glu271) interacts with Mg(2+).

It belongs to the FBPase class 1 family. In terms of assembly, homotetramer. The cofactor is Mg(2+).

Its subcellular location is the cytoplasm. The enzyme catalyses beta-D-fructose 1,6-bisphosphate + H2O = beta-D-fructose 6-phosphate + phosphate. Its pathway is carbohydrate biosynthesis; Calvin cycle. The chain is Fructose-1,6-bisphosphatase class 1 from Rhodopseudomonas palustris (strain ATCC BAA-98 / CGA009).